The chain runs to 574 residues: Regulatory protein NPR4 (574 aa).

The interval 1-21 (MAATAIEPSSSISFTSSHLSN) is disordered. The segment covering 9 to 20 (SSSISFTSSHLS) has biased composition (low complexity). Ser-11 bears the Phosphoserine mark. Positions 54 to 130 (TDAEIIIEEE…IYTGRLKPFP (77 aa)) constitute a BTB domain. The C2HC NPR-type zinc finger occupies 133–147 (VSTCVDSVCAHDSCK). Residues Cys-136, Cys-141, His-143, and Cys-146 each contribute to the Zn(2+) site. ANK repeat units follow at residues 252–280 (ERTGKVLKALDSDDVELVKLLLTESDITL), 281–311 (DQANGLHYAVAYSDPKVVTQVLDLDMADVNF), and 315–344 (RGYTVLHIAAMRREPTIIIPLIQKGANASD). Residues 373–516 (EPSKYRLCID…MDQYMDEEIP (144 aa)) form a salicylic acid-binding core (SBC) region. A salicylate-binding site is contributed by Arg-419. Positions 521-574 (PEKGTVKERRQKRMRYNELKNDVKKAYSKDKVARSCLSSSSPASSLREALENPT) are disordered. Positions 535–553 (RYNELKNDVKKAYSKDKVA) are enriched in basic and acidic residues. Residues 554–567 (RSCLSSSSPASSLR) are compositionally biased toward low complexity.

This sequence belongs to the plant 'ANKYRIN-BTB/POZ' family. 'NPR1-like' subfamily. In terms of assembly, forms homodimers, homotetramers and heterodimers with NPR3 in the presence of salicylic acid (SA). Interacts with TGA2, TGA3, TGA5, TGA6 and TGA7. Interacts with CUL3A, a core component of the cullin-RING ubiquitin ligases (CRL). Binds to NPR1; this interaction is disrupted by association with SA, probably due to conformational changes.

The protein resides in the nucleus. Its pathway is protein modification; protein ubiquitination. Salicylic acid (SA)-binding substrate-specific adapter of an E3 ubiquitin-protein ligase complex (CUL3-RBX1-BTB) which mediates the ubiquitination and subsequent proteasomal degradation of NPR1 in the absence of SA. Together with NPR3, acts as receptor of salicylic acid to monitor immunity in a NPR1-dependent manner and induce systemic acquired resistance (SAR). Involved in the regulation of basal defense responses against pathogens, and may be implicated in the cross-talk between the SA- and JA-dependent signaling pathways. The sequence is that of Regulatory protein NPR4 from Arabidopsis thaliana (Mouse-ear cress).